A 256-amino-acid chain; its full sequence is Ubiquinone/menaquinone biosynthesis C-methyltransferase UbiE (256 aa).

S-adenosyl-L-methionine-binding positions include Thr79, Asp100, and 128–129 (DA).

It belongs to the class I-like SAM-binding methyltransferase superfamily. MenG/UbiE family.

The enzyme catalyses a 2-demethylmenaquinol + S-adenosyl-L-methionine = a menaquinol + S-adenosyl-L-homocysteine + H(+). The catalysed reaction is a 2-methoxy-6-(all-trans-polyprenyl)benzene-1,4-diol + S-adenosyl-L-methionine = a 5-methoxy-2-methyl-3-(all-trans-polyprenyl)benzene-1,4-diol + S-adenosyl-L-homocysteine + H(+). It functions in the pathway quinol/quinone metabolism; menaquinone biosynthesis; menaquinol from 1,4-dihydroxy-2-naphthoate: step 2/2. It participates in cofactor biosynthesis; ubiquinone biosynthesis. In terms of biological role, methyltransferase required for the conversion of demethylmenaquinol (DMKH2) to menaquinol (MKH2) and the conversion of 2-polyprenyl-6-methoxy-1,4-benzoquinol (DDMQH2) to 2-polyprenyl-3-methyl-6-methoxy-1,4-benzoquinol (DMQH2). This is Ubiquinone/menaquinone biosynthesis C-methyltransferase UbiE from Pseudomonas fluorescens (strain SBW25).